Here is a 317-residue protein sequence, read N- to C-terminus: tRNA dimethylallyltransferase (317 aa).

18–25 (GPTATGKT) is an ATP binding site. 20–25 (TATGKT) provides a ligand contact to substrate. Interaction with substrate tRNA regions lie at residues 43 to 46 (DSAL), 167 to 171 (QRIQR), and 281 to 288 (KRQITWLR).

It belongs to the IPP transferase family. As to quaternary structure, monomer. It depends on Mg(2+) as a cofactor.

It catalyses the reaction adenosine(37) in tRNA + dimethylallyl diphosphate = N(6)-dimethylallyladenosine(37) in tRNA + diphosphate. Its function is as follows. Catalyzes the transfer of a dimethylallyl group onto the adenine at position 37 in tRNAs that read codons beginning with uridine, leading to the formation of N6-(dimethylallyl)adenosine (i(6)A). The chain is tRNA dimethylallyltransferase from Alkalilimnicola ehrlichii (strain ATCC BAA-1101 / DSM 17681 / MLHE-1).